A 70-amino-acid chain; its full sequence is Phycocyanin-645 alpha-2 chain (70 aa).

Arg16 provides a ligand contact to (2R,3E)-phycocyanobilin. 3 residues coordinate mesobiliverdin: Cys18, Tyr26, and Lys41.

Belongs to the phycoerythrin family. As to quaternary structure, heterotetramer of 2 different alpha chains and 2 identical beta chains which form 2 alpha-beta heterodimers within the heterotetramer. Post-translationally, contains one phycocyanobilin chromophore, one mesobiliverdin chromophore and one 15,16-dihydrobiliverdin chromophore with binding mediated by both the alpha and beta subunits.

Its subcellular location is the plastid. It is found in the chloroplast thylakoid membrane. In terms of biological role, light-harvesting photosynthetic tetrapyrrole chromophore-protein from the phycobiliprotein complex. This is Phycocyanin-645 alpha-2 chain from Chroomonas sp.